A 401-amino-acid polypeptide reads, in one-letter code: Argininosuccinate synthase (401 aa).

ATP contacts are provided by residues 11–19 (AYSGGLDTS) and Ala-38. Positions 89 and 94 each coordinate L-citrulline. An ATP-binding site is contributed by Gly-119. L-aspartate is bound by residues Thr-121, Asn-125, and Asp-126. Residue Asn-125 participates in L-citrulline binding. The L-citrulline site is built by Arg-129, Ser-180, Ser-189, Glu-265, and Tyr-277.

This sequence belongs to the argininosuccinate synthase family. Type 1 subfamily. As to quaternary structure, homotetramer.

Its subcellular location is the cytoplasm. It carries out the reaction L-citrulline + L-aspartate + ATP = 2-(N(omega)-L-arginino)succinate + AMP + diphosphate + H(+). It functions in the pathway amino-acid biosynthesis; L-arginine biosynthesis; L-arginine from L-ornithine and carbamoyl phosphate: step 2/3. This Syntrophus aciditrophicus (strain SB) protein is Argininosuccinate synthase.